A 587-amino-acid polypeptide reads, in one-letter code: Inorganic phosphate transporter PHO84 (587 aa).

Residues 1–67 (MSSVNKDTIH…FGWQQVKTIS (67 aa)) lie on the Extracellular side of the membrane. Lys6 participates in a covalent cross-link: Glycyl lysine isopeptide (Lys-Gly) (interchain with G-Cter in ubiquitin). Residues 68–88 (IAGVGFLTDSYDIFAINLGIT) form a helical membrane-spanning segment. The Cytoplasmic portion of the chain corresponds to 89–108 (MMSYVYWHGSMPGPSQTLLK). Residues 109–129 (VSTSVGTVIGQFGFGTLADIV) traverse the membrane as a helical segment. The Extracellular segment spans residues 130–133 (GRKR). A helical membrane pass occupies residues 134–154 (IYGMELIIMIVCTILQTTVAH). The Cytoplasmic portion of the chain corresponds to 155–156 (SP). The chain crosses the membrane as a helical span at residues 157-177 (AINFVAVLTFYRIVMGIGIGG). The Extracellular portion of the chain corresponds to 178-201 (DYPLSSIITSEFATTKWRGAIMGA). The helical transmembrane segment at 202 to 222 (VFANQAWGQISGGIIALILVA) threads the bilayer. Over 223–250 (AYKGELEYANSGAECDARCQKACDQMWR) the chain is Cytoplasmic. The chain crosses the membrane as a helical span at residues 251–271 (ILIGLGTVLGLACLYFRLTIP). Residues 272–345 (ESPRYQLDVN…RHFGQWKYGK (74 aa)) are Extracellular-facing. A Glycyl lysine isopeptide (Lys-Gly) (interchain with G-Cter in ubiquitin) cross-link involves residue Lys298. Position 302 is a phosphothreonine (Thr302). Ser303 and Ser316 each carry phosphoserine. Thr317 is modified (phosphothreonine). Ser321 carries the post-translational modification Phosphoserine. A helical membrane pass occupies residues 346–366 (ILLGTAGSWFTLDVAFYGLSL). The Cytoplasmic segment spans residues 367–395 (NSAVILQTIGYAGSKNVYKKLYDTAVGNL). The chain crosses the membrane as a helical span at residues 396 to 416 (ILICAGSLPGYWVSVFTVDII). The Extracellular portion of the chain corresponds to 417 to 419 (GRK). The chain crosses the membrane as a helical span at residues 420–440 (PIQLAGFIILTALFCVIGFAY). The Cytoplasmic segment spans residues 441–442 (HK). The chain crosses the membrane as a helical span at residues 443-463 (LGDHGLLALYVICQFFQNFGP). The Extracellular segment spans residues 464–485 (NTTTFIVPGECFPTRYRSTAHG). A helical transmembrane segment spans residues 486 to 506 (ISAASGKVGAIIAQTALGTLI). Over 507–522 (DHNCARDGKPTNCWLP) the chain is Cytoplasmic. A helical membrane pass occupies residues 523–543 (HVMEIFALFMLLGIFTTLLIP). Topologically, residues 544-587 (ETKRKTLEEINELYHDEIDPATLNFRNKNNDIESSSPSQLQHEA) are extracellular. Positions 568-587 (FRNKNNDIESSSPSQLQHEA) are disordered. Ser577, Ser579, and Ser581 each carry phosphoserine.

It belongs to the major facilitator superfamily. Phosphate:H(+) symporter (TC 2.A.1.9) family. May function as a monomer. Post-translationally, phosphorylated; phosphorylation increases after phosphate addition to the growth medium. Ubiquitinated in a phosphate-dependent manner; ubiquitination may influence the trafficking of PHO84 to the cell membrane and serve as a signal for endocytosis and internalization.

Its subcellular location is the cell membrane. The protein resides in the vacuole. It catalyses the reaction phosphate(in) + H(+)(in) = phosphate(out) + H(+)(out). It carries out the reaction Mn(2+)(in) = Mn(2+)(out). The catalysed reaction is Zn(2+)(in) = Zn(2+)(out). The enzyme catalyses Cu(2+)(in) = Cu(2+)(out). It catalyses the reaction Co(2+)(in) = Co(2+)(out). Its activity is regulated as follows. Transport activity is inhibited in the presence of the protonophore carbonylcyanide m-chlorophenylhydrazone. Transport activity is inhibited by glycerol-3-phosphate. Transport activity is inhibited by phosphonoacetic acid. Signaling activity is stimulated by glycerol-3-phosphate which acts as a nontransported PHO84 agonist that can trigger PKA signaling. Signaling activity is stimulated by arsenate. Functionally, proton-coupled high-affinity transporter for external inorganic phosphate. Acts as a transceptor, a membrane protein that in addition to its transporter activity also possesses receptor-like signaling activity; mediates activation of the protein kinase A (PKA) pathway targets during growth induction, triggered by phosphate addition to cells growth-arrested due to previous phosphate starvation. Is not an essential protein, since constitutive, low affinity phosphate transporters exist in yeast. Can function as a low affinity metal transporter that transports manganese, zinc, cobalt and copper. Plays a role in manganese homeostasis predominantly under manganese surplus conditions. The polypeptide is Inorganic phosphate transporter PHO84 (PHO84) (Saccharomyces cerevisiae (strain ATCC 204508 / S288c) (Baker's yeast)).